The following is a 352-amino-acid chain: MALPFRKDLEKYKDLDEDELLGNLSETELKQLETVLDDLDPENALLPAGFRQKNQTSKSTTGPFDREHLLSYLEKEALEHKDREDYVPYTGEKKGKIFIPKQKPVQTFTEEKVSLDPELEEALTSASDTELCDLAAILGMHNLITNTKFCNIMGSSNGVDQEHFSNVVKGEKILPVFDEPPNPTNVEESLKRTKENDAHLVEVNLNNIKNIPIPTLKDFAKALETNTHVKCFSLAATRSNDPVATAFAEMLKVNKTLKSLNVESNFITGVGILALIDALRDNETLAELKIDNQRQQLGTAVELEMAKMLEENTNILKFGYQFTQQGPRTRAANAITKNNDLVRKRRVEGDHQ.

Position 25 is a phosphoserine (Ser25).

It belongs to the tropomodulin family. In terms of assembly, binds to the N-terminus of tropomyosin and to actin. Interacts with FLII. As to expression, ubiquitous.

The protein localises to the cytoplasm. Its subcellular location is the cytoskeleton. In terms of biological role, blocks the elongation and depolymerization of the actin filaments at the pointed end. The Tmod/TM complex contributes to the formation of the short actin protofilament, which in turn defines the geometry of the membrane skeleton. In Homo sapiens (Human), this protein is Tropomodulin-3 (TMOD3).